Consider the following 123-residue polypeptide: Peptide methionine sulfoxide reductase MsrA (123 aa).

Cys-8 is a catalytic residue.

The protein belongs to the MsrA Met sulfoxide reductase family.

It carries out the reaction L-methionyl-[protein] + [thioredoxin]-disulfide + H2O = L-methionyl-(S)-S-oxide-[protein] + [thioredoxin]-dithiol. The enzyme catalyses [thioredoxin]-disulfide + L-methionine + H2O = L-methionine (S)-S-oxide + [thioredoxin]-dithiol. Its function is as follows. Has an important function as a repair enzyme for proteins that have been inactivated by oxidation. Catalyzes the reversible oxidation-reduction of methionine sulfoxide in proteins to methionine. The chain is Peptide methionine sulfoxide reductase MsrA from Thermoactinomyces vulgaris.